The chain runs to 22 residues: Polydim-I (22 aa).

Expressed by the venom gland.

The protein localises to the secreted. Antibacterial peptide. Acts on the Mycobacterium abscessus subsp. massiliense cell wall. Reduces 40-50% of the bacterial load in macrophages infected with different M.abscessus strains. Is not cytotoxic towards mammalian cells, and shows no hemolytic activity against human erythrocytes. In vivo, reduces the bacterial load in the lungs, spleen, and liver of highly susceptible mice intravenously infected with M.abscessus. This is Polydim-I from Polybia dimorpha (Neotropical wasp).